We begin with the raw amino-acid sequence, 873 residues long: Nonsense-mediated mRNA decay factor SMG8 (873 aa).

Residues 531–604 form a disordered region; the sequence is AKKMAQREDE…ESMASKTERE (74 aa). Residues 540–550 are compositionally biased toward acidic residues; it reads ELAEEDTDLDI. Composition is skewed to low complexity over residues 551-562 and 574-583; these read PESLLDPDSTSP and SSSESSSQES. Positions 591–604 are enriched in basic and acidic residues; that stretch reads SRRDESMASKTERE.

It belongs to the SMG8 family.

In terms of biological role, involved in nonsense-mediated decay (NMD) of mRNAs containing premature stop codons. Probable component of kinase complex containing smg-1 and recruited to stalled ribosomes. In Caenorhabditis elegans, this protein is Nonsense-mediated mRNA decay factor SMG8 (smg-8).